A 500-amino-acid chain; its full sequence is Glutamate decarboxylase (500 aa).

Lys277 carries the post-translational modification N6-(pyridoxal phosphate)lysine. Residues 469–500 (VHKKTDSEVQLEMITAWKKFVEEKKKKTNRVC) are calmodulin-binding.

Belongs to the group II decarboxylase family. As to quaternary structure, homodimer. Pyridoxal 5'-phosphate serves as cofactor.

The enzyme catalyses L-glutamate + H(+) = 4-aminobutanoate + CO2. In terms of biological role, catalyzes the production of GABA. The calmodulin-binding is calcium-dependent and it is proposed that this may, directly or indirectly, form a calcium regulated control of GABA biosynthesis. The protein is Glutamate decarboxylase (GAD) of Petunia hybrida (Petunia).